Consider the following 37-residue polypeptide: Large ribosomal subunit protein bL36 (37 aa).

The protein belongs to the bacterial ribosomal protein bL36 family.

This Koribacter versatilis (strain Ellin345) protein is Large ribosomal subunit protein bL36.